Here is a 194-residue protein sequence, read N- to C-terminus: MASAAASESSSSSSSSSAGAANGQSAGESGGGGAQDSTFECNICLDTSKDAVISLCGHLFCWPCLHQWLETRPNRQVCPVCKAGISRDKVIPLYGRGSTGQQDPREKTPPRPQGQRPEPENRGGFQGFGFGDGGFQMSFGIGAFPFGIFATAFNINDGRPPPAAPGTPQHTDEQFLSRLFLFVALLIMFWLLIA.

The span at 1-27 (MASAAASESSSSSSSSSAGAANGQSAG) shows a compositional bias: low complexity. The interval 1 to 32 (MASAAASESSSSSSSSSAGAANGQSAGESGGG) is disordered. Positions 31–82 (GGGAQDSTFECNICLDTSKDAVISLCGHLFCWPCLHQWLETRPNRQVCPVCK) are required for ubiquitin ligase activity and protection against ER stress-induced cell death. The RING-type zinc-finger motif lies at 41-82 (CNICLDTSKDAVISLCGHLFCWPCLHQWLETRPNRQVCPVCK). The disordered stretch occupies residues 92 to 126 (PLYGRGSTGQQDPREKTPPRPQGQRPEPENRGGFQ). Transmembrane regions (helical) follow at residues 133-153 (GGFQMSFGIGAFPFGIFATAF) and 174-194 (QFLSRLFLFVALLIMFWLLIA).

It localises to the mitochondrion outer membrane. Its subcellular location is the endoplasmic reticulum membrane. It carries out the reaction S-ubiquitinyl-[E2 ubiquitin-conjugating enzyme]-L-cysteine + [acceptor protein]-L-lysine = [E2 ubiquitin-conjugating enzyme]-L-cysteine + N(6)-ubiquitinyl-[acceptor protein]-L-lysine.. It functions in the pathway protein modification; protein ubiquitination. In terms of biological role, E3 ubiquitin-protein ligase that regulates selective mitochondrial autophagy by mediating 'Lys-63'-linked polyubiquitination. Acts in the endoplasmic reticulum (ER)-associated degradation (ERAD) pathway, which targets misfolded proteins that accumulate in the endoplasmic reticulum (ER) for ubiquitination and subsequent proteasome-mediated degradation. Protects cells from ER stress-induced apoptosis. Responsible for the cotranslational ubiquitination and degradation of CFTR in the ERAD pathway. Also acts as a regulator of the innate antiviral response by catalyzing 'Lys-27'-linked polyubiquitination of CGAS, thereby promoting CGAS cyclic GMP-AMP synthase activity. Preferentially associates with the E2 enzymes UBE2J1 and UBE2J2. The protein is E3 ubiquitin-protein ligase RNF185 (rnf185) of Danio rerio (Zebrafish).